The following is a 698-amino-acid chain: Elongation factor G (698 aa).

The region spanning A10–T285 is the tr-type G domain. GTP contacts are provided by residues A19–T26, D83–H87, and N137–D140.

This sequence belongs to the TRAFAC class translation factor GTPase superfamily. Classic translation factor GTPase family. EF-G/EF-2 subfamily.

The protein localises to the cytoplasm. In terms of biological role, catalyzes the GTP-dependent ribosomal translocation step during translation elongation. During this step, the ribosome changes from the pre-translocational (PRE) to the post-translocational (POST) state as the newly formed A-site-bound peptidyl-tRNA and P-site-bound deacylated tRNA move to the P and E sites, respectively. Catalyzes the coordinated movement of the two tRNA molecules, the mRNA and conformational changes in the ribosome. The protein is Elongation factor G of Parafrankia sp. (strain EAN1pec).